The primary structure comprises 337 residues: LIX1-like protein (337 aa).

The interval 1–55 is disordered; it reads METMRAQRLQPGVGVGGRGTLRALRPGVTGAPTSAATPPVGPPPAPPPPAPPLPP. Positions 26–38 are enriched in low complexity; that stretch reads PGVTGAPTSAATP. The span at 39–55 shows a compositional bias: pro residues; the sequence is PVGPPPAPPPPAPPLPP.

It belongs to the LIX1 family.

This is LIX1-like protein (Lix1l) from Mus musculus (Mouse).